Here is a 381-residue protein sequence, read N- to C-terminus: MSARVARAGWAWRSWGRRAASSLREPPPDAVDVAELLRDSSVAEEGAQEAVARRRPPSQCSVLLFPGQGCQAVGMGSGLLHLPRVRQLYEAAHRVLGYDLLELCLRGPQEDLDRTVHCQPAVFVASLAAVEKLHHLQPAVIDNCVAAAGFSVGEFAALVFAGAMDFSEGLYAVKARAEAMQEASEAVPSGMLSVLGQRQSNFSFACLEAQEHCKSLGIENPVCQVSNYLFPDCRVISGHLEALQFLRRNSAKYHFRRTKMLPVSGGFHTCLMEPAVDPLMKVLGSINIKKPLVAVHSNVSGQKYTHPQHIRKLLGQQVVSPVKWEQTMHSIYERKKGMEFPSTYEVGPGQQLGSILKCCNRQAWKSYSHVDVMQNIMDPDP.

Catalysis depends on residues Ser151 and His268. Lys312 is modified (N6-succinyllysine).

The protein belongs to the type II malonyltransferase family. As to expression, expressed in retinal ganglion cells.

The protein localises to the mitochondrion. It carries out the reaction holo-[ACP] + malonyl-CoA = malonyl-[ACP] + CoA. It functions in the pathway lipid metabolism; fatty acid biosynthesis. In terms of biological role, catalyzes the transfer of a malonyl moiety from malonyl-CoA to the free thiol group of the phosphopantetheine arm of the mitochondrial ACP protein (NDUFAB1). This suggests the existence of the biosynthesis of fatty acids in mitochondria. The polypeptide is Malonyl-CoA-acyl carrier protein transacylase, mitochondrial (Mus musculus (Mouse)).